We begin with the raw amino-acid sequence, 364 residues long: DNA polymerase IV (364 aa).

The 185-residue stretch at 14 to 198 (IIHIDMDAFF…LPIEKFHGVG (185 aa)) folds into the UmuC domain. Asp18 and Asp116 together coordinate Mg(2+). The active site involves Glu117.

This sequence belongs to the DNA polymerase type-Y family. As to quaternary structure, monomer. Mg(2+) serves as cofactor.

Its subcellular location is the cytoplasm. It catalyses the reaction DNA(n) + a 2'-deoxyribonucleoside 5'-triphosphate = DNA(n+1) + diphosphate. Poorly processive, error-prone DNA polymerase involved in untargeted mutagenesis. Copies undamaged DNA at stalled replication forks, which arise in vivo from mismatched or misaligned primer ends. These misaligned primers can be extended by PolIV. Exhibits no 3'-5' exonuclease (proofreading) activity. May be involved in translesional synthesis, in conjunction with the beta clamp from PolIII. The polypeptide is DNA polymerase IV (Streptococcus agalactiae serotype Ia (strain ATCC 27591 / A909 / CDC SS700)).